A 284-amino-acid polypeptide reads, in one-letter code: Bifunctional protein FolD (284 aa).

Residues 165 to 167, Ser-190, and Ile-231 each bind NADP(+); that span reads GRS.

Belongs to the tetrahydrofolate dehydrogenase/cyclohydrolase family. In terms of assembly, homodimer.

The enzyme catalyses (6R)-5,10-methylene-5,6,7,8-tetrahydrofolate + NADP(+) = (6R)-5,10-methenyltetrahydrofolate + NADPH. It catalyses the reaction (6R)-5,10-methenyltetrahydrofolate + H2O = (6R)-10-formyltetrahydrofolate + H(+). It participates in one-carbon metabolism; tetrahydrofolate interconversion. Functionally, catalyzes the oxidation of 5,10-methylenetetrahydrofolate to 5,10-methenyltetrahydrofolate and then the hydrolysis of 5,10-methenyltetrahydrofolate to 10-formyltetrahydrofolate. In Streptococcus thermophilus (strain CNRZ 1066), this protein is Bifunctional protein FolD.